A 259-amino-acid chain; its full sequence is MSKREDGRLDHELRPVIITRGFTENPAGSVLIEFGHTKVLCTASVTEGVPRWRKATGLGWLTAEYAMLPSATHSRSDRESVRGRLSGRTQEISRLISRSLRACIDLAALGENTIAIDCDVLQADGGTRTAAITGAYVALADAVTYLSAAGKLSDPRPLSCAIAAVSVGVVDGRIRVDLPYEEDSRAEVDMNVVATDTGTLVEIQGTGEGATFARSTLDKLLDMALGACDTLFAAQRDALALPYPGVLPQGPPPPKAFGT.

Phosphate-binding positions include Arg88 and 126 to 128 (GTR).

This sequence belongs to the RNase PH family. In terms of assembly, homohexameric ring arranged as a trimer of dimers.

It catalyses the reaction tRNA(n+1) + phosphate = tRNA(n) + a ribonucleoside 5'-diphosphate. In terms of biological role, phosphorolytic 3'-5' exoribonuclease that plays an important role in tRNA 3'-end maturation. Removes nucleotide residues following the 3'-CCA terminus of tRNAs; can also add nucleotides to the ends of RNA molecules by using nucleoside diphosphates as substrates, but this may not be physiologically important. Probably plays a role in initiation of 16S rRNA degradation (leading to ribosome degradation) during starvation. In Mycobacterium bovis (strain ATCC BAA-935 / AF2122/97), this protein is Ribonuclease PH.